The sequence spans 219 residues: Abasic site processing protein YobE (219 aa).

The active-site Nucleophile is the Cys2. Cys2 carries the post-translational modification Thiazolidine linkage to a ring-opened DNA abasic site. Glu106 is a catalytic residue.

It belongs to the SOS response-associated peptidase family.

Formation and reversal of DNA-protein cross-link depends on DNA context. Catalyzes formation of the thiazolidine linkage in presence of abasic sites in single-stranded DNA. Mediates the reversal of the thiazolidine cross-link in presence of double stranded DNA. Functionally, sensor of abasic sites in single-stranded DNA (ssDNA) required to preserve genome integrity by promoting error-free repair of abasic sites. Recognizes and binds abasic sites in ssDNA at replication forks and chemically modifies the lesion by forming a covalent cross-link with DNA: forms a stable thiazolidine linkage between a ring-opened abasic site and the alpha-amino and sulfhydryl substituents of its N-terminal catalytic cysteine residue. The DNA-protein cross-link is then reversed: able to catalyze the reversal of the thiazolidine cross-link and cycle between a cross-link and a non-cross-linked state depending on DNA context: mediates self-reversal of the thiazolidine cross-link in double stranded DNA. May act as a protease: mediates autocatalytic processing of its N-terminal methionine in order to expose the catalytic cysteine. This chain is Abasic site processing protein YobE (yobE), found in Bacillus subtilis (strain 168).